Consider the following 718-residue polypeptide: Serine/threonine-protein kinase tousled-like 2 (718 aa).

Positions 24-85 (GVSKGPLNSE…KGTPRGHKIS (62 aa)) are disordered. The segment covering 29–44 (PLNSESSNQSLCSVGS) has biased composition (polar residues). Basic and acidic residues predominate over residues 46–61 (SDKEVETPEKKQNDQR). S73, Q94, L99, and S102 each carry phosphoserine. The tract at residues 147–176 (QQNSPSSTGSGNTEHSCSSQKQISIQHRQT) is disordered. Residues 193-244 (NSDLEKKEGRIDDLLRANCDLRRQIDEQQKMLEKYKERLNRCVTMSKKLLIE) are required for interaction with TLK1 and DYNLL1/LC8. Coiled coils occupy residues 193–244 (NSDL…LLIE), 285–315 (AFQN…KRKP), and 349–397 (HEQE…DNSQ). The interval 310–337 (LAKRKPPAMGQAPPATNEQKQRKSKTNG) is disordered. The region spanning 408–687 (YLLLHLLGRG…VQQLACDPYL (280 aa)) is the Protein kinase domain. Residues 414–422 (LGRGGFSEV) and K437 contribute to the ATP site. D538 functions as the Proton acceptor in the catalytic mechanism. Phosphoserine; by CHEK1 is present on S696.

This sequence belongs to the protein kinase superfamily. Ser/Thr protein kinase family. Monomer. May form homodimers; homodimerization may enhance autophosphoylation and enzymatic activity. Heterodimer with TLK1. Interacts with YWHAZ; association with 14-3-3 proteins such as YWHAZ regulates subcellular location. May also interact with FEZ1/LZTS1 and FEZ2. Interacts with CHD7 and CHD8. Interacts with DYNLL1/LC8. Requires Mg(2+) as cofactor. Post-translationally, phosphorylated at Ser-696, probably by CHEK1. In terms of processing, autophosphorylated; phosphorylation promotes the assembly of higher order oligomers and enzymatic activity. Ubiquitously expressed in all tissues examined, with high levels in heart and testis, in particular the pachytene spermatocytes and in round spermatids. Some evidence for the existence of a testis-specific isoform suggesting a role in spermatogenesis.

The protein localises to the nucleus. It localises to the nucleoplasm. The protein resides in the cytoplasm. Its subcellular location is the perinuclear region. It is found in the cytoskeleton. The enzyme catalyses L-seryl-[protein] + ATP = O-phospho-L-seryl-[protein] + ADP + H(+). The catalysed reaction is L-threonyl-[protein] + ATP = O-phospho-L-threonyl-[protein] + ADP + H(+). With respect to regulation, cell cycle-regulated, with maximal activity in the S-phase. Rapidly and transiently inhibited by phosphorylation following the generation of DNA double-stranded breaks during S-phase, probably by CHEK1, possibly at Ser-696. This inhibition is cell cycle checkpoint- and ATM-dependent. Its function is as follows. Serine/threonine-protein kinase involved in the process of chromatin assembly and probably also DNA replication, transcription, repair, and chromosome segregation. Phosphorylates the chromatin assembly factors ASF1A and ASF1B. Phosphorylation of ASF1A prevents its proteasome-mediated degradation, thereby enhancing chromatin assembly. Negative regulator of amino acid starvation-induced autophagy. Functionally, testis-specific isoforms may play a role in spermatogenesis. Highly expressed in embryos throughout development. The protein is Serine/threonine-protein kinase tousled-like 2 (Tlk2) of Mus musculus (Mouse).